The primary structure comprises 591 residues: PDZ and LIM domain protein 5 (591 aa).

At serine 2 the chain carries N-acetylserine. Serine 2 bears the Phosphoserine mark. The region spanning 2 to 85 (SNYNVSLVGP…SLNMTLQRAS (84 aa)) is the PDZ domain. Lysine 89 carries the post-translational modification N6-acetyllysine; alternate. Lysine 89 is modified (N6-succinyllysine; alternate). Lysine 89 is covalently cross-linked (Glycyl lysine isopeptide (Lys-Gly) (interchain with G-Cter in SUMO2); alternate). 3 positions are modified to phosphoserine: serine 111, serine 134, and serine 137. Disordered stretches follow at residues 125 to 240 (YNKV…GPPR) and 255 to 334 (THSD…SNRP). The segment covering 134–143 (SVSSPKVTSI) has biased composition (polar residues). A compositionally biased stretch (low complexity) spans 144 to 161 (PSPSSAFTPAHAATSSHA). A compositionally biased stretch (pro residues) spans 162-174 (SPPPVAAVTPPPL). Polar residues-rich tracts occupy residues 183–195 (ANPS…SPPN) and 207–217 (PTVTSVCSESA). Phosphoserine occurs at positions 228 and 260. 2 stretches are compositionally biased toward basic and acidic residues: residues 258–273 (DASK…DWRP) and 293–304 (EHLKESENDNAK). The span at 310-329 (PEPSQQSASPLSAAESLESP) shows a compositional bias: low complexity. Phosphoserine occurs at positions 313 and 318. Residue lysine 346 is modified to N6-acetyllysine. The tract at residues 348-398 (VGSTSVKSPSWQRPNQAAPSTGRISNSASSSGTGAPMKPAVGPPQPSDQDT) is disordered. Positions 349–380 (GSTSVKSPSWQRPNQAAPSTGRISNSASSSGT) are enriched in polar residues. A phosphoserine mark is found at serine 355 and serine 357. 3 consecutive LIM zinc-binding domains span residues 413–472 (PMCA…FFAP), 472–531 (PECG…LFGT), and 531–591 (TICR…SVNF).

Interacts with various PKC isoforms through the LIM domains. Interacts with actin and alpha-actinin through the PDZ domain. Interacts (via LIM domains) with SIPA1L1/SPAR; this interaction may occur preferentially with isoform 1. As to expression, detected in brain, in neurons, including in hippocampal neurons, and glial cells (at protein level). Detected in heart and skeletal muscle.

It is found in the postsynaptic density. The protein resides in the presynapse. Its subcellular location is the postsynapse. The protein localises to the cytoplasm. It localises to the cytosol. Functionally, may play an important role in the heart development by scaffolding PKC to the Z-disk region. May play a role in the regulation of cardiomyocyte expansion. Isoforms lacking the LIM domains may negatively modulate the scaffolding activity of isoform 1. Overexpression promotes the development of heart hypertrophy. Contributes to the regulation of dendritic spine morphogenesis in neurons. May be required to restrain postsynaptic growth of excitatory synapses. Isoform 1, but not isoform 2, expression favors spine thinning and elongation. This is PDZ and LIM domain protein 5 (Pdlim5) from Rattus norvegicus (Rat).